Reading from the N-terminus, the 483-residue chain is Cysteine proteinase 1, mitochondrial (483 aa).

The N-terminal 30 residues, 1 to 30, are a transit peptide targeting the mitochondrion; sequence MLPTSVSWSLYLKTFRSHLLRAPQIVLKRM. Residues Cys-102, His-398, and Asn-421 contribute to the active site. Residue Lys-483 is a propeptide, removed in mature form; by autocatalysis.

Belongs to the peptidase C1 family. Homohexamer. Binds to nucleic acids. Binds single-stranded DNA and RNA with higher affinity than double-stranded DNA. In terms of processing, the N-terminus of isoform Cytoplasmic is blocked.

Its subcellular location is the mitochondrion. The protein localises to the cytoplasm. The enzyme catalyses Inactivates bleomycin B2 (a cytotoxic glycometallopeptide) by hydrolysis of a carboxyamide bond of beta-aminoalanine, but also shows general aminopeptidase activity. The specificity varies somewhat with source, but amino acid arylamides of Met, Leu and Ala are preferred.. Inhibited by E64, a specific inhibitor of cysteine proteases, N-ethylmaleimide, iodacetamide, and mercury and zinc ions. Its function is as follows. The normal physiological role of the enzyme is unknown, but it is not essential for the viability of yeast cells. Has aminopeptidase activity, shortening substrate peptides sequentially by 1 amino acid. Has bleomycin hydrolase activity, which can protect the cell from the toxic effects of bleomycin. Has homocysteine-thiolactonase activity, protecting the cell against homocysteine toxicity. Acts as a repressor in the GAL4 regulatory system, but this does not require either the peptidase or nucleic acid-binding activities. This chain is Cysteine proteinase 1, mitochondrial (LAP3), found in Saccharomyces cerevisiae (strain YJM789) (Baker's yeast).